The sequence spans 480 residues: Salicylate hydroxylase asL1 (480 aa).

A helical transmembrane segment spans residues 17–37; sequence PMEIAIVGGGIVGVILAIGLT. FAD contacts are provided by glutamate 47 and alanine 60. The N-linked (GlcNAc...) asparagine glycan is linked to asparagine 87. Arginine 131 contributes to the FAD binding site. N-linked (GlcNAc...) asparagine glycosylation is present at asparagine 168. Catalysis depends on residues arginine 213 and tyrosine 246. Asparagine 250 is a glycosylation site (N-linked (GlcNAc...) asparagine). Residues aspartate 329 and alanine 342 each coordinate FAD. N-linked (GlcNAc...) asparagine glycosylation is found at asparagine 400 and asparagine 464.

It belongs to the paxM FAD-dependent monooxygenase family. The cofactor is FAD.

It is found in the membrane. It participates in secondary metabolite biosynthesis; terpenoid biosynthesis. In terms of biological role, salicylate hydroxylase; part of the gene cluster that mediates the biosynthesis of xenovulene A, an unusual meroterpenoid that has potent inhibitory effects on the human gamma-aminobutyrate A (GABAA) benzodiazepine receptor. The first step of xenovulene A biosynthesis is the biosynthesis of 3-methylorcinaldehyde performed by the non-reducing polyketide synthase aspks1. The salicylate hydroxylase asL1 then catalyzes the oxidative dearomatization of 3-methylorcinaldehyde to yield a dearomatized hydroxycyclohexadione. The 2-oxoglutarate-dependent dioxygenase asL3 further catalyzes the oxidative ring expansion to provide the first tropolone metabolite. The cytochrome P450 monooxygenase asR2 allows the synthesis of tropolone hemiacetal. In parallel, a previously unrecognised class of terpene cyclase, asR6, produces alpha-humulene from farnesylpyrophosphate (FPP). The putative Diels-Alderase asR5 probably catalyzes the formation of the tropolone-humulene skeleton by linking humulene and the polyketide moiety. Oxidative-ring contractions catalyzed by asL4 and asL6 then processively remove carbon atoms from the polyketide to yield xenovulene A. The chain is Salicylate hydroxylase asL1 from Sarocladium schorii (Acremonium strictum (strain IMI 501407)).